We begin with the raw amino-acid sequence, 233 residues long: Flagellar calcium-binding protein TB-17 (233 aa).

The segment covering 1–11 (MGCSGSKNASN) has biased composition (polar residues). Residues 1–29 (MGCSGSKNASNPKDGAASKGGKDGKTTAD) are disordered. Residues 20–29 (GGKDGKTTAD) show a composition bias toward basic and acidic residues. EF-hand domains lie at 48–83 (ESKSRRIELFKQFDTNGTGKLGFREVLDGCYSILKL), 130–165 (YDIFELTVIFDTMDKDGSLLLELHEFKEALPKLKEW), and 167–202 (VDITDATTVFNEIDTNGSGVVTFDEFSCWAVTKKLQ). Ca(2+) contacts are provided by Asp61, Asn63, Thr65, Lys67, Glu72, Asp143, Asp145, Ser147, Glu154, Asp180, Asn182, Ser184, and Glu191. Residues 203–233 (VSGDPDDEENGANEGDGANAGDGVPAAEGSA) form a disordered region. The segment covering 214 to 225 (ANEGDGANAGDG) has biased composition (low complexity).

It belongs to the calflagin family.

The protein resides in the cell projection. The protein localises to the cilium. It is found in the flagellum. May contribute to the rapid motility of the trypanosomes, playing a role either in flagellar structure or in calcium metabolism. Could alternate between a GDP-bound inactive form to a calcium/GTP-bound active form. The sequence is that of Flagellar calcium-binding protein TB-17 (FCABP) from Trypanosoma brucei brucei.